Consider the following 426-residue polypeptide: Serine--tRNA ligase (426 aa).

Residue 230-232 participates in L-serine binding; it reads TAE. Residue 261–263 coordinates ATP; it reads RSE. Glutamate 284 contacts L-serine. An ATP-binding site is contributed by 348–351; it reads EISS. Residue serine 384 participates in L-serine binding.

Belongs to the class-II aminoacyl-tRNA synthetase family. Type-1 seryl-tRNA synthetase subfamily. Homodimer. The tRNA molecule binds across the dimer.

Its subcellular location is the cytoplasm. The enzyme catalyses tRNA(Ser) + L-serine + ATP = L-seryl-tRNA(Ser) + AMP + diphosphate + H(+). The catalysed reaction is tRNA(Sec) + L-serine + ATP = L-seryl-tRNA(Sec) + AMP + diphosphate + H(+). It participates in aminoacyl-tRNA biosynthesis; selenocysteinyl-tRNA(Sec) biosynthesis; L-seryl-tRNA(Sec) from L-serine and tRNA(Sec): step 1/1. Catalyzes the attachment of serine to tRNA(Ser). Is also able to aminoacylate tRNA(Sec) with serine, to form the misacylated tRNA L-seryl-tRNA(Sec), which will be further converted into selenocysteinyl-tRNA(Sec). The protein is Serine--tRNA ligase of Streptococcus mutans serotype c (strain ATCC 700610 / UA159).